A 310-amino-acid polypeptide reads, in one-letter code: Mas-related G-protein coupled receptor member E (310 aa).

The Extracellular segment spans residues 1–22 (MTSLSVHTDSPSTQGEMAFNLT). The N-linked (GlcNAc...) asparagine glycan is linked to N20. The chain crosses the membrane as a helical span at residues 23–43 (ILSLTELLSLGGLLGNGVALW). Topologically, residues 44–60 (LLNQNVYRNPFSIYLLD) are cytoplasmic. Residues 61-81 (VACADLIFLCCHMVAIIPELL) form a helical membrane-spanning segment. Over 82 to 92 (QDQLNFPEFVH) the chain is Extracellular. A helical transmembrane segment spans residues 93–113 (ISLTMLRFFCYIVGLSLLAAI). At 114–133 (STEQCLATLFPAWYLCRRPR) the chain is on the cytoplasmic side. The helical transmembrane segment at 134-154 (YLTTCVCALIWVLCLLLDLLL) threads the bilayer. Residues 155 to 174 (SGACTQFFGAPSYHLCDMLW) are Extracellular-facing. A helical transmembrane segment spans residues 175–195 (LVVAVLLAALCCTMCVTSLLL). The Cytoplasmic segment spans residues 196–213 (LLRVERGPERHQPRGFPT). A helical membrane pass occupies residues 214 to 234 (LVLLAVLLFLFCGLPFGIFWL). At 235–248 (SKNLSWHIPLYFYH) the chain is on the extracellular side. N237 carries an N-linked (GlcNAc...) asparagine glycan. The helical transmembrane segment at 249–269 (FSFFMASVHSAAKPAIYFFLG) threads the bilayer. The Cytoplasmic portion of the chain corresponds to 270–310 (STPGQRFREPLRLVLQRALGDEAELGAGREASQGGLVDMTV).

It belongs to the G-protein coupled receptor 1 family. Mas subfamily.

Its subcellular location is the cell membrane. In terms of biological role, orphan receptor. May regulate nociceptor function and/or development, including the sensation or modulation of pain. This Mus musculus (Mouse) protein is Mas-related G-protein coupled receptor member E (Mrgpre).